The chain runs to 251 residues: Tyrosine transport ATP-binding protein (251 aa).

Residues 2-248 form the ABC transporter domain; it reads LQIKNLSKSF…TVEEILEKFE (247 aa). 39–46 contacts ATP; that stretch reads GSNGTGKS.

This sequence belongs to the ABC transporter superfamily. As to quaternary structure, the complex is probably composed of two ATP-binding proteins (CDR20291_0806), two transmembrane proteins (CDR20291_0807) and a solute-binding protein (CDR20291_0805).

It localises to the cell membrane. It carries out the reaction L-tyrosine(out) + ATP + H2O = L-tyrosine(in) + ADP + phosphate + H(+). Probably part of an ABC transporter complex involved in tyrosine uptake. May also import phenylalanine. Probably responsible for energy coupling to the transport system. This is Tyrosine transport ATP-binding protein from Clostridioides difficile (strain R20291) (Peptoclostridium difficile).